A 228-amino-acid chain; its full sequence is L-ribulose-5-phosphate 4-epimerase UlaF (228 aa).

Substrate is bound by residues 26-27, 43-44, and 72-73; these read GN, SG, and SS. 3 residues coordinate Zn(2+): aspartate 74, histidine 93, and histidine 95. The active-site Proton donor/acceptor is the aspartate 118. Histidine 167 serves as a coordination point for Zn(2+). Catalysis depends on tyrosine 225, which acts as the Proton donor/acceptor.

This sequence belongs to the aldolase class II family. AraD/FucA subfamily. The cofactor is Zn(2+).

It carries out the reaction L-ribulose 5-phosphate = D-xylulose 5-phosphate. The protein operates within cofactor degradation; L-ascorbate degradation; D-xylulose 5-phosphate from L-ascorbate: step 4/4. Functionally, catalyzes the isomerization of L-ribulose 5-phosphate to D-xylulose 5-phosphate. Is involved in the anaerobic L-ascorbate utilization. This chain is L-ribulose-5-phosphate 4-epimerase UlaF, found in Salmonella choleraesuis (strain SC-B67).